Reading from the N-terminus, the 355-residue chain is Peptide chain release factor 1 (355 aa).

Residue Q231 is modified to N5-methylglutamine. The segment covering 280-291 has biased composition (basic and acidic residues); that stretch reads SERLAKESEARK. The interval 280–303 is disordered; that stretch reads SERLAKESEARKSQVGSGDRSERI.

The protein belongs to the prokaryotic/mitochondrial release factor family. Post-translationally, methylated by PrmC. Methylation increases the termination efficiency of RF1.

It localises to the cytoplasm. In terms of biological role, peptide chain release factor 1 directs the termination of translation in response to the peptide chain termination codons UAG and UAA. This Campylobacter jejuni (strain RM1221) protein is Peptide chain release factor 1.